Reading from the N-terminus, the 118-residue chain is Histone H4 (118 aa).

The segment at 1–39 (MATDTGSGRGKGGKGVTLGKGSKGAKASKGGKRIRTKTQ) is disordered. A compositionally biased stretch (gly residues) spans 7 to 22 (SGRGKGGKGVTLGKGS).

Belongs to the histone H4 family. The nucleosome is a histone octamer containing two molecules each of H2A, H2B, H3 and H4 assembled in one H3-H4 heterotetramer and two H2A-H2B heterodimers. The octamer wraps approximately 147 bp of DNA.

It is found in the nucleus. The protein localises to the chromosome. In terms of biological role, core component of nucleosome. Nucleosomes wrap and compact DNA into chromatin, limiting DNA accessibility to the cellular machineries which require DNA as a template. Histones thereby play a central role in transcription regulation, DNA repair, DNA replication and chromosomal stability. DNA accessibility is regulated via a complex set of post-translational modifications of histones, also called histone code, and nucleosome remodeling. The sequence is that of Histone H4 from Entamoeba histolytica (strain ATCC 30459 / HM-1:IMSS / ABRM).